The chain runs to 502 residues: Zinc finger C3HC-type protein 1 (502 aa).

A2 is modified (N-acetylalanine). S24 is subject to Phosphoserine. Position 28 is a phosphothreonine (T28). The tract at residues 36 to 73 (IDEGIAPEEGGVDAKDTSATSQSVNGSPQAEQPSLEST) is disordered. A compositionally biased stretch (polar residues) spans 52–72 (TSATSQSVNGSPQAEQPSLES). 2 positions are modified to phosphoserine: S58 and S62. T84 carries the post-translational modification Phosphothreonine. The C3HC-type zinc-finger motif lies at 102–156 (CAKYGWVTVECDMLKCSSCQAFLCASLQPAFDFDRYKQRCAELKKALCTAHEKFC). The segment at 170–210 (LPLDEPAILVSEFLDRFQSLCHLDLQLPSLRPEDLKTMCLT) is F-box-like. Positions 302–423 (SSPIPGLEGR…SSRSFFDPTS (122 aa)) are disordered. 2 positions are modified to phosphoserine: S321 and S329. Over residues 327 to 338 (TRSQDATFSPGS) the composition is skewed to polar residues. Position 333 is a phosphothreonine (T333). Phosphoserine occurs at positions 335, 338, 344, 354, 359, and 370. Residues 351–360 (RTRSWDSSSP) are compositionally biased toward polar residues. The segment covering 371–380 (PTTRTRPVTR) has biased composition (low complexity). At S381 the chain carries Phosphoserine. T384 and T387 each carry phosphothreonine. S395 carries the post-translational modification Phosphoserine. Positions 396-402 (PLRKAKR) match the Nuclear localization signal motif. S407 and S483 each carry phosphoserine. Positions 407–422 (SSSSSDTSSRSFFDPT) are enriched in low complexity.

Interacts with TPR; this interaction mediates ZC3HC1 nuclear envelopes (NE)-association but also required for proper positioning of a substantial amount of TPR at the nuclear basket (NB). Phosphorylated. May also be weakly phosphorylated on Tyr residues. Widely expressed. Highly expressed in heart, skeletal muscle and testis. Expressed in brain, placenta, lung, kidney, liver, pancreas, spleen, thymus, prostate, ovary small intestine and colon. Weakly or not expressed in leukocytes.

Its subcellular location is the nucleus. It localises to the nucleus envelope. Its function is as follows. Required for proper positioning of a substantial amount of TPR at the nuclear basket (NB) through interaction with TPR. The chain is Zinc finger C3HC-type protein 1 from Homo sapiens (Human).